A 363-amino-acid chain; its full sequence is 3-dehydroquinate synthase (363 aa).

NAD(+) contacts are provided by residues 72–77 (SGEKEK), 130–131 (TT), K142, and K151. Zn(2+) contacts are provided by E184, H247, and H264.

The protein belongs to the sugar phosphate cyclases superfamily. Dehydroquinate synthase family. The cofactor is Co(2+). Requires Zn(2+) as cofactor. NAD(+) serves as cofactor.

It is found in the cytoplasm. The enzyme catalyses 7-phospho-2-dehydro-3-deoxy-D-arabino-heptonate = 3-dehydroquinate + phosphate. Its pathway is metabolic intermediate biosynthesis; chorismate biosynthesis; chorismate from D-erythrose 4-phosphate and phosphoenolpyruvate: step 2/7. Catalyzes the conversion of 3-deoxy-D-arabino-heptulosonate 7-phosphate (DAHP) to dehydroquinate (DHQ). The sequence is that of 3-dehydroquinate synthase from Bacillus anthracis (strain A0248).